The chain runs to 175 residues: Protein FMP23, mitochondrial (175 aa).

The N-terminal 38 residues, 1 to 38, are a transit peptide targeting the mitochondrion; sequence MLINHLSKIRTVRHFSNIKPVLSKEVSRRVIVAPASHF.

It localises to the mitochondrion. In terms of biological role, may be involved in mitochondrial iron or copper homeostatis. The chain is Protein FMP23, mitochondrial (FMP23) from Saccharomyces cerevisiae (strain ATCC 204508 / S288c) (Baker's yeast).